We begin with the raw amino-acid sequence, 291 residues long: Pantothenate synthetase (291 aa).

Position 33 to 40 (33 to 40 (MGALHEGH)) interacts with ATP. The Proton donor role is filled by His40. Gln64 is a binding site for (R)-pantoate. Residue Gln64 coordinates beta-alanine. 157–160 (GEKD) contacts ATP. Residue Gln163 participates in (R)-pantoate binding. ATP is bound by residues Val186 and 194–197 (LSSR).

It belongs to the pantothenate synthetase family. In terms of assembly, homodimer.

Its subcellular location is the cytoplasm. It carries out the reaction (R)-pantoate + beta-alanine + ATP = (R)-pantothenate + AMP + diphosphate + H(+). The protein operates within cofactor biosynthesis; (R)-pantothenate biosynthesis; (R)-pantothenate from (R)-pantoate and beta-alanine: step 1/1. Functionally, catalyzes the condensation of pantoate with beta-alanine in an ATP-dependent reaction via a pantoyl-adenylate intermediate. The protein is Pantothenate synthetase of Rubrobacter xylanophilus (strain DSM 9941 / JCM 11954 / NBRC 16129 / PRD-1).